Here is a 427-residue protein sequence, read N- to C-terminus: 3-phosphoshikimate 1-carboxyvinyltransferase (427 aa).

3-phosphoshikimate is bound by residues Lys20, Ser21, and Arg25. Residue Lys20 participates in phosphoenolpyruvate binding. Phosphoenolpyruvate-binding residues include Gly92 and Arg120. Positions 166, 168, 312, and 339 each coordinate 3-phosphoshikimate. Gln168 provides a ligand contact to phosphoenolpyruvate. Asp312 functions as the Proton acceptor in the catalytic mechanism. 2 residues coordinate phosphoenolpyruvate: Arg343 and Arg385.

The protein belongs to the EPSP synthase family. As to quaternary structure, monomer.

The protein resides in the cytoplasm. The catalysed reaction is 3-phosphoshikimate + phosphoenolpyruvate = 5-O-(1-carboxyvinyl)-3-phosphoshikimate + phosphate. It participates in metabolic intermediate biosynthesis; chorismate biosynthesis; chorismate from D-erythrose 4-phosphate and phosphoenolpyruvate: step 6/7. In terms of biological role, catalyzes the transfer of the enolpyruvyl moiety of phosphoenolpyruvate (PEP) to the 5-hydroxyl of shikimate-3-phosphate (S3P) to produce enolpyruvyl shikimate-3-phosphate and inorganic phosphate. The protein is 3-phosphoshikimate 1-carboxyvinyltransferase of Streptococcus sanguinis (strain SK36).